A 331-amino-acid chain; its full sequence is Holliday junction branch migration complex subunit RuvB (331 aa).

Positions 1–182 (MSSDTLHKYE…FGIPLHLEFY (182 aa)) are large ATPase domain (RuvB-L). Residues Leu21, Arg22, Gly63, Lys66, Thr67, Thr68, 129-131 (EDY), Arg172, Tyr182, and Arg219 each bind ATP. Residue Thr67 coordinates Mg(2+). The tract at residues 183–254 (SVDELVLVIK…FANSALFRLG (72 aa)) is small ATPAse domain (RuvB-S). The interval 257–331 (GAGFDKMDLK…FEYLLSSKYI (75 aa)) is head domain (RuvB-H). DNA-binding residues include Arg310 and Arg315.

It belongs to the RuvB family. In terms of assembly, homohexamer. Forms an RuvA(8)-RuvB(12)-Holliday junction (HJ) complex. HJ DNA is sandwiched between 2 RuvA tetramers; dsDNA enters through RuvA and exits via RuvB. An RuvB hexamer assembles on each DNA strand where it exits the tetramer. Each RuvB hexamer is contacted by two RuvA subunits (via domain III) on 2 adjacent RuvB subunits; this complex drives branch migration. In the full resolvosome a probable DNA-RuvA(4)-RuvB(12)-RuvC(2) complex forms which resolves the HJ.

Its subcellular location is the cytoplasm. The catalysed reaction is ATP + H2O = ADP + phosphate + H(+). Its function is as follows. The RuvA-RuvB-RuvC complex processes Holliday junction (HJ) DNA during genetic recombination and DNA repair, while the RuvA-RuvB complex plays an important role in the rescue of blocked DNA replication forks via replication fork reversal (RFR). RuvA specifically binds to HJ cruciform DNA, conferring on it an open structure. The RuvB hexamer acts as an ATP-dependent pump, pulling dsDNA into and through the RuvAB complex. RuvB forms 2 homohexamers on either side of HJ DNA bound by 1 or 2 RuvA tetramers; 4 subunits per hexamer contact DNA at a time. Coordinated motions by a converter formed by DNA-disengaged RuvB subunits stimulates ATP hydrolysis and nucleotide exchange. Immobilization of the converter enables RuvB to convert the ATP-contained energy into a lever motion, pulling 2 nucleotides of DNA out of the RuvA tetramer per ATP hydrolyzed, thus driving DNA branch migration. The RuvB motors rotate together with the DNA substrate, which together with the progressing nucleotide cycle form the mechanistic basis for DNA recombination by continuous HJ branch migration. Branch migration allows RuvC to scan DNA until it finds its consensus sequence, where it cleaves and resolves cruciform DNA. The polypeptide is Holliday junction branch migration complex subunit RuvB (Anaplasma marginale (strain St. Maries)).